We begin with the raw amino-acid sequence, 214 residues long: Adenylate kinase (214 aa).

10–15 serves as a coordination point for ATP; that stretch reads GAGKGT. Positions 30-59 are NMP; that stretch reads STGDMLRAAIKAGTELGKQAKSVIDAGQLV. AMP contacts are provided by residues threonine 31, arginine 36, 57–59, 85–88, and glutamine 92; these read QLV and GFPR. Residues 122-159 are LID; sequence GRRAHLASGRTYHNVYNPPKVEGKDDVTGEDLVIREDD. Residues arginine 123 and 132-133 contribute to the ATP site; that span reads TY. Positions 156 and 167 each coordinate AMP. Lysine 200 lines the ATP pocket.

It belongs to the adenylate kinase family. In terms of assembly, monomer.

The protein localises to the cytoplasm. It carries out the reaction AMP + ATP = 2 ADP. Its pathway is purine metabolism; AMP biosynthesis via salvage pathway; AMP from ADP: step 1/1. Catalyzes the reversible transfer of the terminal phosphate group between ATP and AMP. Plays an important role in cellular energy homeostasis and in adenine nucleotide metabolism. The protein is Adenylate kinase of Photobacterium profundum (strain SS9).